The following is a 444-amino-acid chain: Gamma-glutamyl phosphate reductase (444 aa).

Belongs to the gamma-glutamyl phosphate reductase family.

The protein resides in the cytoplasm. It catalyses the reaction L-glutamate 5-semialdehyde + phosphate + NADP(+) = L-glutamyl 5-phosphate + NADPH + H(+). It participates in amino-acid biosynthesis; L-proline biosynthesis; L-glutamate 5-semialdehyde from L-glutamate: step 2/2. In terms of biological role, catalyzes the NADPH-dependent reduction of L-glutamate 5-phosphate into L-glutamate 5-semialdehyde and phosphate. The product spontaneously undergoes cyclization to form 1-pyrroline-5-carboxylate. This is Gamma-glutamyl phosphate reductase from Albidiferax ferrireducens (strain ATCC BAA-621 / DSM 15236 / T118) (Rhodoferax ferrireducens).